Consider the following 121-residue polypeptide: Histone H2B (121 aa).

The disordered stretch occupies residues 1–27; that stretch reads MAPKKAPAAAEKKVKKAPTTEKKNKKK. Ala-2 bears the N,N,N-trimethylalanine mark. An N6-acetyllysine mark is found at Lys-5 and Lys-41. Lys-115 is covalently cross-linked (Glycyl lysine isopeptide (Lys-Gly) (interchain with G-Cter in ubiquitin)).

This sequence belongs to the histone H2B family. In terms of assembly, the nucleosome is a histone octamer containing two molecules each of H2A, H2B, H3 and H4 assembled in one H3-H4 heterotetramer and two H2A-H2B heterodimers. The octamer wraps approximately 147 bp of DNA. In terms of processing, monoubiquitination of Lys-115 gives a specific tag for epigenetic transcriptional activation and is also prerequisite for histone H3 'Lys-4' and 'Lys-79' methylation. Acetylation occurs almost exclusively in the MAC.

Its subcellular location is the nucleus. The protein resides in the chromosome. Its function is as follows. Core component of nucleosome. Nucleosomes wrap and compact DNA into chromatin, limiting DNA accessibility to the cellular machineries which require DNA as a template. Histones thereby play a central role in transcription regulation, DNA repair, DNA replication and chromosomal stability. DNA accessibility is regulated via a complex set of post-translational modifications of histones, also called histone code, and nucleosome remodeling. The protein is Histone H2B of Tetrahymena pyriformis.